Here is a 514-residue protein sequence, read N- to C-terminus: F-box-like/WD repeat-containing protein TBL1XR1 (514 aa).

S2 is modified (N-acetylserine). A LisH domain is found at 4-36 (SSDEVNFLVYRYLQESGFSHSAFTFGIESHISQ). Residues 41 to 86 (GALVPPAALISIIQKGLQYVEAEVSINEDGTLFDGRPIESLSLIDA) form the F-box-like domain. An N6-acetyllysine modification is found at K102. Position 119 is a phosphoserine (S119). Residues 120–135 (QQGSAKNGENTANGEE) are compositionally biased toward low complexity. Residues 120 to 139 (QQGSAKNGENTANGEENGAH) are disordered. WD repeat units lie at residues 167-206 (GHESEVFICAWNPVSDLLASGSGDSTARIWNLSENSTSGS), 223-262 (PSNKDVTSLDWNSEGTLLATGSYDGFARIWTKDGNLASTL), 264-303 (QHKGPIFALKWNKKGNFILSAGVDKTTIIWDAHTGEAKQQ), 306-344 (FHSAPALDVDWQSNNTFASCSTDMCIHVCKLGQDRPIKT), 347-386 (GHTNEVNAIKWDPTGNLLASCSDDMTLKIWSMKQDNCVHD), 389-437 (AHNK…CIHT), 440-479 (KHQEPVYSVAFSPDGRYLASGSFDKCVHIWNTQTGALVHS), and 481-513 (RGTGGIFEVCWNAAGDKVGASASDGSVCVLDLR). K277 participates in a covalent cross-link: Glycyl lysine isopeptide (Lys-Gly) (interchain with G-Cter in SUMO2).

The protein belongs to the WD repeat EBI family. In terms of assembly, component of the N-Cor repressor complex, at least composed of NCOR1, NCOR2, HDAC3, TBL1X, TBL1XR1, CORO2A and GPS2. Probable component of some E3 ubiquitin ligase complex. Interacts with histones H2B and H4. Interacts with MECP2; bridges interaction between MECP2 and NCOR1. Interacts with USP44. In terms of tissue distribution, widely expressed including the pituitary, hypothalamus, white and brown adipose tissue, muscle and liver.

It localises to the nucleus. F-box-like protein involved in the recruitment of the ubiquitin/19S proteasome complex to nuclear receptor-regulated transcription units. Plays an essential role in transcription activation mediated by nuclear receptors. Probably acts as integral component of the N-Cor corepressor complex that mediates the recruitment of the 19S proteasome complex, leading to the subsequent proteasomal degradation of N-Cor complex, thereby allowing cofactor exchange, and transcription activation. In Homo sapiens (Human), this protein is F-box-like/WD repeat-containing protein TBL1XR1 (TBL1XR1).